Consider the following 338-residue polypeptide: UPF0324 membrane protein TauZ (338 aa).

10 helical membrane passes run 12–31 (IEAAFPGFAVSALVAATAQF), 36–55 (YGAPAMLLALLLGLALNFLA), 75–92 (LGVALLGARISAGMLAAL), 96–118 (AIALVAAGVVLTILFALAASRLV), 125–147 (ALLTGGSVAICGASAAMAIAAVL), 162–184 (LSVTVLSTVAMVLYPMLAGFFGF), 191–213 (VFLGGTIHDVAQVVGAGFSIGPE), 223–245 (LIRVSMLAPVVLCFSLAIRARGL), 258–280 (PGFVIGFLVLAALNSLGLVPAAV), and 315–337 (AIALILAETVFLAVFVTIGLHVL).

It belongs to the UPF0324 family.

Its subcellular location is the cell membrane. This is UPF0324 membrane protein TauZ (tauZ) from Paracoccus denitrificans.